Here is a 273-residue protein sequence, read N- to C-terminus: Urease accessory protein UreD (273 aa).

It belongs to the UreD family. As to quaternary structure, ureD, UreF and UreG form a complex that acts as a GTP-hydrolysis-dependent molecular chaperone, activating the urease apoprotein by helping to assemble the nickel containing metallocenter of UreC. The UreE protein probably delivers the nickel.

It is found in the cytoplasm. Required for maturation of urease via the functional incorporation of the urease nickel metallocenter. This is Urease accessory protein UreD from Rhizobium leguminosarum bv. trifolii (strain WSM2304).